Reading from the N-terminus, the 221-residue chain is Transcription factor bHLH126 (221 aa).

Disordered stretches follow at residues M1 to L46 and R104 to S132. The 53-residue stretch at K42–T94 folds into the bHLH domain.

As to quaternary structure, homodimer.

Its subcellular location is the nucleus. In Arabidopsis thaliana (Mouse-ear cress), this protein is Transcription factor bHLH126 (BHLH126).